The chain runs to 78 residues: Delta-conotoxin TxVIA (78 aa).

The N-terminal stretch at 1–22 (MKLTCMMIVAVLFLTAWTFATA) is a signal peptide. Residues 23 to 49 (DDSGNGLENLFSNAHHQMKNPEASKLN) constitute a propeptide that is removed on maturation. Intrachain disulfides connect C53-C68, C60-C72, and C67-C77. M59 is modified (methionine sulfoxide; partial).

The protein belongs to the conotoxin O1 superfamily. As to expression, expressed by the venom duct. Is present in all duct parts with a highest content in part 4 (distal part near the pharynx).

It is found in the secreted. Functionally, delta-conotoxins bind to site 6 of voltage-gated sodium channels (Nav) and inhibit the inactivation process. Binding of this toxin is strongly calcium-dependent but not voltage-dependent. The binding site is most likely on the extracellular side of the sodium channel. Binds receptor sites on both mollusk and rat central nervous system, but despite its high affinity binding to rat sodium channel, it has no functional effect in vivo and in vitro on it. Also has no effect on Gambusia fish. Is important in mollusk for the paralysis of the prey. Upon injection of the peptide, a subordinate lobster assumes an exaggerated dominant posture (of a 'King-Kong' lobster!). The protein is Delta-conotoxin TxVIA of Conus textile (Cloth-of-gold cone).